The following is a 329-amino-acid chain: NAC domain-containing protein 79 (329 aa).

In terms of domain architecture, NAC spans 17–167 (LPPGFRFHPT…EWVICRVFHK (151 aa)). The DNA-binding element occupies 114-173 (VGMKKTLVFYRGRAPKGQKTNWVMHEYRLDGKLSAHNLPKTAKNEWVICRVFHKTAGGKK).

Expressed at low levels in leaves.

It localises to the nucleus. This chain is NAC domain-containing protein 79, found in Arabidopsis thaliana (Mouse-ear cress).